A 396-amino-acid polypeptide reads, in one-letter code: Acetate kinase (396 aa).

Asn8 serves as a coordination point for Mg(2+). An ATP-binding site is contributed by Lys15. Arg90 lines the substrate pocket. The active-site Proton donor/acceptor is the Asp147. Residues 207–211 (HLGSG), 283–285 (DMR), and 330–334 (GIGEN) each bind ATP. Glu384 is a binding site for Mg(2+).

It belongs to the acetokinase family. Homodimer. Requires Mg(2+) as cofactor. It depends on Mn(2+) as a cofactor.

The protein resides in the cytoplasm. The catalysed reaction is acetate + ATP = acetyl phosphate + ADP. Its pathway is metabolic intermediate biosynthesis; acetyl-CoA biosynthesis; acetyl-CoA from acetate: step 1/2. In terms of biological role, catalyzes the formation of acetyl phosphate from acetate and ATP. Can also catalyze the reverse reaction. The chain is Acetate kinase from Lacticaseibacillus paracasei (strain ATCC 334 / BCRC 17002 / CCUG 31169 / CIP 107868 / KCTC 3260 / NRRL B-441) (Lactobacillus paracasei).